A 95-amino-acid chain; its full sequence is Co-chaperonin GroES (95 aa).

It belongs to the GroES chaperonin family. In terms of assembly, heptamer of 7 subunits arranged in a ring. Interacts with the chaperonin GroEL.

It is found in the cytoplasm. Its function is as follows. Together with the chaperonin GroEL, plays an essential role in assisting protein folding. The GroEL-GroES system forms a nano-cage that allows encapsulation of the non-native substrate proteins and provides a physical environment optimized to promote and accelerate protein folding. GroES binds to the apical surface of the GroEL ring, thereby capping the opening of the GroEL channel. This Syntrophotalea carbinolica (strain DSM 2380 / NBRC 103641 / GraBd1) (Pelobacter carbinolicus) protein is Co-chaperonin GroES.